The sequence spans 1521 residues: Lysophospholipase NTE1 (1521 aa).

The Cytoplasmic portion of the chain corresponds to 1–50 (MDVVNSTARAAVTSATAVTAVTGTGDRHPNPLSSAVAAASDVANAHGSSS). The chain crosses the membrane as a helical span at residues 51 to 71 (WLGLFARVVLWLLQFVSMVLY). Topologically, residues 72–96 (YAIKLATISVPTLLYTLFSTSLTVT) are lumenal. A helical membrane pass occupies residues 97–117 (MNATTLMLIVAAMIGAISWVV). The Cytoplasmic segment spans residues 118-1521 (RYRYLNMYSR…RTMAPRRASI (1404 aa)). 3 disordered regions span residues 280 to 301 (HADE…PNYP), 315 to 372 (SVPN…SAHP), and 738 to 768 (HAMD…KVDD). Polar residues-rich tracts occupy residues 316–334 (VPNT…NNLP) and 738–753 (HAMD…QRSP). Residues 670–789 (PASP…GGLA) and 837–957 (RLTN…IASR) each bind a nucleoside 3',5'-cyclic phosphate. Positions 1217–1381 (LVLGGGGARG…VDNLTVSHMK (165 aa)) constitute a PNPLA domain. The GXGXXG motif lies at 1221-1226 (GGGARG). The GXSXG motif lies at 1248–1252 (GTSIG). Ser1250 serves as the catalytic Nucleophile. The Proton acceptor role is filled by Asp1368. The DGA/G signature appears at 1368-1370 (DGG).

It belongs to the NTE family.

Its subcellular location is the endoplasmic reticulum membrane. The enzyme catalyses a 1-acyl-sn-glycero-3-phosphocholine + H2O = sn-glycerol 3-phosphocholine + a fatty acid + H(+). Its activity is regulated as follows. Inhibited by organophosphorus esters. In terms of biological role, intracellular phospholipase B that catalyzes the double deacylation of phosphatidylcholine (PC) to glycerophosphocholine (GroPCho). Plays an important role in membrane lipid homeostasis. Responsible for the rapid PC turnover in response to inositol, elevated temperatures, or when choline is present in the growth medium. This chain is Lysophospholipase NTE1 (NTE1), found in Chaetomium globosum (strain ATCC 6205 / CBS 148.51 / DSM 1962 / NBRC 6347 / NRRL 1970) (Soil fungus).